The chain runs to 505 residues: DEAD-box ATP-dependent RNA helicase 8 (505 aa).

Positions 1–85 (MNNRGRYPPG…GQIPGGNSNG (85 aa)) are disordered. Over residues 20–31 (PNPNYQSRSGYQ) the composition is skewed to polar residues. Low complexity predominate over residues 43 to 71 (NYAQNHQQQFQQAPSQPHQYQQQQQQQQQ). Positions 131–159 (NEFEDYFLKRELLMGIYEKGFERPSPIQE) match the Q motif motif. One can recognise a Helicase ATP-binding domain in the interval 162 to 332 (IPIALTGRDI…DRFLTNPYVI (171 aa)). Position 175 to 182 (175 to 182 (AKNGTGKT)) interacts with ATP. A Phosphothreonine modification is found at Thr237. The DEAD box signature appears at 280–283 (DEAD). A Helicase C-terminal domain is found at 342–502 (GITQFYAFVE…QIPPHIDQAI (161 aa)).

The protein belongs to the DEAD box helicase family. DDX6/DHH1 subfamily.

It localises to the cytoplasm. It is found in the P-body. The enzyme catalyses ATP + H2O = ADP + phosphate + H(+). ATP-dependent RNA helicase involved in mRNA turnover, and more specifically in mRNA decapping. In Arabidopsis thaliana (Mouse-ear cress), this protein is DEAD-box ATP-dependent RNA helicase 8 (RH8).